Reading from the N-terminus, the 233-residue chain is Small ribosomal subunit protein uS2 (233 aa).

Belongs to the universal ribosomal protein uS2 family.

In Bacillus cereus (strain G9842), this protein is Small ribosomal subunit protein uS2.